A 469-amino-acid polypeptide reads, in one-letter code: Argininosuccinate lyase (469 aa).

The protein belongs to the lyase 1 family. Argininosuccinate lyase subfamily.

Its subcellular location is the cytoplasm. It carries out the reaction 2-(N(omega)-L-arginino)succinate = fumarate + L-arginine. The protein operates within amino-acid biosynthesis; L-arginine biosynthesis; L-arginine from L-ornithine and carbamoyl phosphate: step 3/3. The chain is Argininosuccinate lyase from Saccharophagus degradans (strain 2-40 / ATCC 43961 / DSM 17024).